Reading from the N-terminus, the 679-residue chain is Stress-70 protein, mitochondrial (679 aa).

Residues 1–46 constitute a mitochondrion transit peptide; that stretch reads MISASRAAAARLVGTTASRSPAAARHQDGWNGLSHEAFRFVSRRDY. Positions 1–432 are interaction with NFS1; sequence MISASRAAAA…IQGGVLAGDV (432 aa). ADP contacts are provided by T63 and N64. Residues 63–431 form a nucleotide-binding domain (NBD) region; the sequence is TNSCVAVMEG…AIQGGVLAGD (369 aa). K76 carries the post-translational modification N6-acetyllysine. Phosphothreonine is present on T87. 2 positions are modified to N6-acetyllysine; alternate: K135 and K138. Residues K135 and K138 each carry the N6-succinyllysine; alternate modification. K143 is subject to N6-acetyllysine. The residue at position 206 (K206) is an N6-acetyllysine; alternate. K206 is modified (N6-succinyllysine; alternate). An N6-malonyllysine; alternate modification is found at K206. N6-acetyllysine is present on residues K234 and K288. K300 is subject to N6-acetyllysine; alternate. K300 is modified (N6-succinyllysine; alternate). Residues E313, K316, and S320 each coordinate ADP. The residue at position 360 (K360) is an N6-acetyllysine; alternate. K360 bears the N6-succinyllysine; alternate mark. Residue K368 is modified to N6-succinyllysine. Positions 388 and 391 each coordinate ADP. N6-succinyllysine is present on K394. Residue S408 is modified to Phosphoserine. The segment at 432–441 is interdomain linker; it reads VTDVLLLDVT. Residues 432-679 are interaction with FXN and ISCU; it reads VTDVLLLDVT…QKEDQKEEKQ (248 aa). A substrate-binding domain (SBD) region spans residues 442-679; sequence PLSLGIETLG…QKEDQKEEKQ (238 aa). R513 is modified (omega-N-methylarginine). Residues K567 and K600 each carry the N6-acetyllysine; alternate modification. N6-succinyllysine; alternate is present on residues K567 and K600. An N6-succinyllysine modification is found at K610. K612 is modified (N6-acetyllysine). K646 carries the N6-acetyllysine; alternate modification. K646 is subject to N6-succinyllysine; alternate. A disordered region spans residues 655–679; the sequence is MASEREGSGSSSTGEQKEDQKEEKQ. Positions 669–679 are enriched in basic and acidic residues; sequence EQKEDQKEEKQ.

The protein belongs to the heat shock protein 70 family. As to quaternary structure, interacts strongly with the intermediate form of FXN and weakly with its mature form. Interacts with HSCB. Associates with the mitochondrial contact site and cristae organizing system (MICOS) complex, composed of at least MICOS10/MIC10, CHCHD3/MIC19, CHCHD6/MIC25, APOOL/MIC27, IMMT/MIC60, APOO/MIC23/MIC26 and QIL1/MIC13. This complex was also known under the names MINOS or MitOS complex. The MICOS complex associates with mitochondrial outer membrane proteins SAMM50, MTX1, MTX2 and DNAJC11, mitochondrial inner membrane protein TMEM11 and with HSPA9. Interacts with DNLZ, the interaction is required to prevent self-aggregation. Interacts with TESPA1. Interacts with PDPN. Interacts with NFU1, NFS1 and ISCU. Interacts with TP53; the interaction promotes TP53 degradation. Interacts (via SBD domain) with UBXN2A; the interaction with UBXN2A inhibits HSPA9 interaction with and degradation of TP53, thereby promotes TP53 translocation to the nucleus. Interacts with ITPR1 AND VDAC1; this interaction couples ITPR1 to VDAC1. Component of the TIM23 mitochondrial inner membrane pre-sequence translocase complex.

The protein localises to the mitochondrion. Its subcellular location is the nucleus. The protein resides in the nucleolus. It localises to the cytoplasm. It is found in the mitochondrion matrix. It catalyses the reaction ATP + H2O = ADP + phosphate + H(+). Its activity is regulated as follows. The chaperone activity is regulated by ATP-induced allosteric coupling of the nucleotide-binding (NBD) and substrate-binding (SBD) domains. ATP binding in the nucleotide-binding pocket (NBP) leads to a conformational change in the NBD, which is transferred through the interdomain linker (IDL) to the substrate-binding domain (SBD). This elicits a reduced substrate affinity and a faster substrate exchange rate. Upon hydrolysis of ATP to ADP, the protein undergoes a conformational change that increases its affinity for substrate proteins. It cycles through repeated phases of ATP hydrolysis and nucleotide exchange, facilitating repeated cycles of substrate binding and release. Functions in collaboration with co-chaperones. Functions with the co-chaperone, DNLZ, to maintain solubility and regulate ATP hydrolysis. Nucleotide exchange factors, GRPEL1 and GRPEL2, accelerate nucleotide exchange. In terms of biological role, mitochondrial chaperone that plays a key role in mitochondrial protein import, folding, and assembly. Plays an essential role in the protein quality control system, the correct folding of proteins, the re-folding of misfolded proteins, and the targeting of proteins for subsequent degradation. These processes are achieved through cycles of ATP binding, ATP hydrolysis, and ADP release, mediated by co-chaperones. In mitochondria, it associates with the TIM (translocase of the inner membrane) protein complex to assist in the import and folding of mitochondrial proteins. Plays an important role in mitochondrial iron-sulfur cluster (ISC) biogenesis, interacts with and stabilizes ISC cluster assembly proteins FXN, NFU1, NFS1 and ISCU. Regulates erythropoiesis via stabilization of ISC assembly. Regulates mitochondrial calcium-dependent apoptosis by coupling two calcium channels, ITPR1 and VDAC1, at the mitochondria-associated endoplasmic reticulum (ER) membrane to facilitate calcium transport from the ER lumen to the mitochondria intermembrane space, providing calcium for the downstream calcium channel MCU, which releases it into the mitochondrial matrix. Although primarily located in the mitochondria, it is also found in other cellular compartments. In the cytosol, it associates with proteins involved in signaling, apoptosis, or senescence. It may play a role in cell cycle regulation via its interaction with and promotion of degradation of TP53. May play a role in the control of cell proliferation and cellular aging. Protects against reactive oxygen species (ROS). Extracellular HSPA9 plays a cytoprotective role by preventing cell lysis following immune attack by the membrane attack complex by disrupting formation of the complex. The protein is Stress-70 protein, mitochondrial of Rattus norvegicus (Rat).